The following is a 360-amino-acid chain: Chorismate synthase (360 aa).

Residues R48 and R54 each contribute to the NADP(+) site. Residues 125–127 (RSS), 246–247 (NA), G286, 301–305 (KPTSS), and R327 contribute to the FMN site.

Belongs to the chorismate synthase family. In terms of assembly, homotetramer. FMNH2 is required as a cofactor.

The catalysed reaction is 5-O-(1-carboxyvinyl)-3-phosphoshikimate = chorismate + phosphate. It functions in the pathway metabolic intermediate biosynthesis; chorismate biosynthesis; chorismate from D-erythrose 4-phosphate and phosphoenolpyruvate: step 7/7. Catalyzes the anti-1,4-elimination of the C-3 phosphate and the C-6 proR hydrogen from 5-enolpyruvylshikimate-3-phosphate (EPSP) to yield chorismate, which is the branch point compound that serves as the starting substrate for the three terminal pathways of aromatic amino acid biosynthesis. This reaction introduces a second double bond into the aromatic ring system. The protein is Chorismate synthase of Actinobacillus pleuropneumoniae serotype 7 (strain AP76).